A 352-amino-acid polypeptide reads, in one-letter code: 4-hydroxybenzaldehyde synthase, chloroplastic (352 aa).

N122 is a glycosylation site (N-linked (GlcNAc...) asparagine). Intrachain disulfides connect C159/C199 and C190/C231. N-linked (GlcNAc...) asparagine glycosylation is present at N247. C289 and C339 are joined by a disulfide. Residues H298 and N318 contribute to the active site.

It belongs to the peptidase C1 family. Forms homodimers, homotrimers and homotetramers. In terms of tissue distribution, mainly expressed in pods, but also present in stems, roots, leaves and embryos (at protein level).

It is found in the plastid. The protein resides in the chloroplast. The catalysed reaction is (E)-4-coumarate + H2O = 4-hydroxybenzaldehyde + acetate. It participates in aromatic compound metabolism; phenylpropanoid biosynthesis. Inhibited by ascorbate. Functionally, involved in the biosynthesis of vanillin (4-hydroxy-3-methoxy-benzaldehyde) and derivative natural products, key components of vanilla pods flavor. Catalyzes the conversion of (E)-4-coumarate to 4-hydroxybenzaldehyde, a vanillin precursor. Mediates the conversion of ferulic acid to 3-methoxy-4-hydroxybenzaldehyde with a very low efficiency. Cannot use cinnamic, caffeic, sinapic and o-coumaric acids as substrates. This chain is 4-hydroxybenzaldehyde synthase, chloroplastic, found in Vanilla planifolia (Vanilla).